Consider the following 445-residue polypeptide: Maltoporin (445 aa).

An N-terminal signal peptide occupies residues 1–25 (MKMKAKWLPIAAGVTAALASQAAFA).

The protein belongs to the porin LamB (TC 1.B.3) family. In terms of assembly, homotrimer formed of three 18-stranded antiparallel beta-barrels, containing three independent channels.

It localises to the cell outer membrane. The catalysed reaction is beta-maltose(in) = beta-maltose(out). In terms of biological role, involved in the transport of maltose and maltodextrins. The sequence is that of Maltoporin from Aeromonas salmonicida.